The primary structure comprises 450 residues: Phosphoglucosamine mutase (450 aa).

Ser-107 acts as the Phosphoserine intermediate in catalysis. Positions 107, 246, 248, and 250 each coordinate Mg(2+). Ser-107 carries the post-translational modification Phosphoserine.

Belongs to the phosphohexose mutase family. The cofactor is Mg(2+). Post-translationally, activated by phosphorylation.

The catalysed reaction is alpha-D-glucosamine 1-phosphate = D-glucosamine 6-phosphate. In terms of biological role, catalyzes the conversion of glucosamine-6-phosphate to glucosamine-1-phosphate. This chain is Phosphoglucosamine mutase, found in Aromatoleum aromaticum (strain DSM 19018 / LMG 30748 / EbN1) (Azoarcus sp. (strain EbN1)).